Reading from the N-terminus, the 134-residue chain is Protein NrdI (134 aa).

Belongs to the NrdI family.

Probably involved in ribonucleotide reductase function. This Chromohalobacter salexigens (strain ATCC BAA-138 / DSM 3043 / CIP 106854 / NCIMB 13768 / 1H11) protein is Protein NrdI.